Consider the following 267-residue polypeptide: Glucosamine-6-phosphate deaminase (267 aa).

D72 serves as the catalytic Proton acceptor; for enolization step. The active-site For ring-opening step is D141. H143 functions as the Proton acceptor; for ring-opening step in the catalytic mechanism. E148 functions as the For ring-opening step in the catalytic mechanism.

It belongs to the glucosamine/galactosamine-6-phosphate isomerase family. NagB subfamily. As to quaternary structure, homohexamer.

The enzyme catalyses alpha-D-glucosamine 6-phosphate + H2O = beta-D-fructose 6-phosphate + NH4(+). It participates in amino-sugar metabolism; N-acetylneuraminate degradation; D-fructose 6-phosphate from N-acetylneuraminate: step 5/5. Its activity is regulated as follows. Allosterically activated by N-acetylglucosamine 6-phosphate (GlcNAc6P). In terms of biological role, catalyzes the reversible isomerization-deamination of glucosamine 6-phosphate (GlcN6P) to form fructose 6-phosphate (Fru6P) and ammonium ion. The polypeptide is Glucosamine-6-phosphate deaminase (Pasteurella multocida (strain Pm70)).